Here is a 226-residue protein sequence, read N- to C-terminus: Uridylate kinase (226 aa).

6–10 (KISGK) provides a ligand contact to ATP. Gly-43 contacts UMP. The ATP site is built by Gly-44 and Arg-48. UMP is bound by residues Asp-65 and 113–119 (FQPGQST). ATP is bound by residues Thr-139, Asn-140, Tyr-145, and Asp-148.

Belongs to the UMP kinase family. In terms of assembly, homohexamer.

Its subcellular location is the cytoplasm. The enzyme catalyses UMP + ATP = UDP + ADP. Its pathway is pyrimidine metabolism; CTP biosynthesis via de novo pathway; UDP from UMP (UMPK route): step 1/1. Its activity is regulated as follows. Inhibited by UTP. Catalyzes the reversible phosphorylation of UMP to UDP. The sequence is that of Uridylate kinase from Sulfurisphaera tokodaii (strain DSM 16993 / JCM 10545 / NBRC 100140 / 7) (Sulfolobus tokodaii).